The sequence spans 157 residues: ATP synthase subunit b', chloroplastic (157 aa).

A helical transmembrane segment spans residues 26–43 (LMASQFLLIMLILDITFY).

It belongs to the ATPase B chain family. As to quaternary structure, F-type ATPases have 2 components, F(1) - the catalytic core - and F(0) - the membrane proton channel. F(1) has five subunits: alpha(3), beta(3), gamma(1), delta(1), epsilon(1). F(0) has four main subunits: a(1), b(1), b'(1) and c(10-14). The alpha and beta chains form an alternating ring which encloses part of the gamma chain. F(1) is attached to F(0) by a central stalk formed by the gamma and epsilon chains, while a peripheral stalk is formed by the delta, b and b' chains.

It localises to the plastid. The protein resides in the chloroplast thylakoid membrane. Functionally, f(1)F(0) ATP synthase produces ATP from ADP in the presence of a proton or sodium gradient. F-type ATPases consist of two structural domains, F(1) containing the extramembraneous catalytic core and F(0) containing the membrane proton channel, linked together by a central stalk and a peripheral stalk. During catalysis, ATP synthesis in the catalytic domain of F(1) is coupled via a rotary mechanism of the central stalk subunits to proton translocation. Its function is as follows. Component of the F(0) channel, it forms part of the peripheral stalk, linking F(1) to F(0). The b'-subunit is a diverged and duplicated form of b found in plants and photosynthetic bacteria. The sequence is that of ATP synthase subunit b', chloroplastic from Cyanidium caldarium (Red alga).